The chain runs to 129 residues: uncharacterized protein (129 aa).

Transmembrane regions (helical) follow at residues 22-42 (LASS…FFFF), 55-75 (VGSF…FFFF), and 88-108 (LPFT…FFFF).

The protein localises to the membrane. This is an uncharacterized protein from Saccharomyces cerevisiae (strain ATCC 204508 / S288c) (Baker's yeast).